A 61-amino-acid polypeptide reads, in one-letter code: Large ribosomal subunit protein bL28 (61 aa).

The tract at residues 1–26 (MAKDFINGKRTQFGNKRSHALNSSRR) is disordered. Over residues 9-25 (KRTQFGNKRSHALNSSR) the composition is skewed to polar residues.

Belongs to the bacterial ribosomal protein bL28 family.

This is Large ribosomal subunit protein bL28 from Limosilactobacillus reuteri (strain DSM 20016) (Lactobacillus reuteri).